Consider the following 231-residue polypeptide: DNA mismatch repair protein MutH (231 aa).

This sequence belongs to the MutH family.

It localises to the cytoplasm. Sequence-specific endonuclease that cleaves unmethylated GATC sequences. It is involved in DNA mismatch repair. This Salmonella paratyphi C (strain RKS4594) protein is DNA mismatch repair protein MutH.